A 415-amino-acid polypeptide reads, in one-letter code: Extracellular signal-regulated kinase 1 (415 aa).

Positions 66–369 (YQILEIVGEG…VEDALKHPYL (304 aa)) constitute a Protein kinase domain. Residues 72-80 (VGEGAYGIV) and Lys95 contribute to the ATP site. Asp190 acts as the Proton acceptor in catalysis. Thr226 is subject to Phosphothreonine. The TXY motif lies at 226-228 (TEY). A Phosphotyrosine modification is found at Tyr228.

This sequence belongs to the protein kinase superfamily. CMGC Ser/Thr protein kinase family. MAP kinase subfamily. Mg(2+) serves as cofactor. Post-translationally, dually phosphorylated on Thr-226 and Tyr-228, which activates the enzyme.

The catalysed reaction is L-seryl-[protein] + ATP = O-phospho-L-seryl-[protein] + ADP + H(+). It catalyses the reaction L-threonyl-[protein] + ATP = O-phospho-L-threonyl-[protein] + ADP + H(+). Its activity is regulated as follows. Activated by tyrosine and threonine phosphorylation. This chain is Extracellular signal-regulated kinase 1 (CEK1), found in Candida albicans (strain WO-1) (Yeast).